A 948-amino-acid chain; its full sequence is Isoleucine--tRNA ligase (948 aa).

The 'HIGH' region signature appears at 58–68 (PYANGDIHIGH). E566 provides a ligand contact to L-isoleucyl-5'-AMP. A 'KMSKS' region motif is present at residues 607–611 (KMSKS). An ATP-binding site is contributed by K610. Zn(2+)-binding residues include C911, C914, C931, and C934.

It belongs to the class-I aminoacyl-tRNA synthetase family. IleS type 1 subfamily. Monomer. The cofactor is Zn(2+).

It localises to the cytoplasm. It carries out the reaction tRNA(Ile) + L-isoleucine + ATP = L-isoleucyl-tRNA(Ile) + AMP + diphosphate. Functionally, catalyzes the attachment of isoleucine to tRNA(Ile). As IleRS can inadvertently accommodate and process structurally similar amino acids such as valine, to avoid such errors it has two additional distinct tRNA(Ile)-dependent editing activities. One activity is designated as 'pretransfer' editing and involves the hydrolysis of activated Val-AMP. The other activity is designated 'posttransfer' editing and involves deacylation of mischarged Val-tRNA(Ile). The polypeptide is Isoleucine--tRNA ligase (Vibrio vulnificus (strain CMCP6)).